Here is a 170-residue protein sequence, read N- to C-terminus: Odorant-binding protein 2a (170 aa).

The signal sequence occupies residues 1–15; it reads MKTLFLGVTLGLAAA. Cysteine 74 and cysteine 166 are oxidised to a cystine.

Belongs to the calycin superfamily. Lipocalin family. Monomer. Strongly expressed in the nasal structures, salivary and lachrymal glands, and lung. Expressed in the liver.

The protein resides in the secreted. Binds and transports small hydrophobic volatile molecules with a higher affinity for aldehydes and large fatty acids, including undecanal, palmitic acid, efficient aldehydes, benzenic aldehydes, heterocyclic aldehydes and aliphatic acids. The sequence is that of Odorant-binding protein 2a (OBP2A) from Homo sapiens (Human).